Consider the following 182-residue polypeptide: Peptidyl-prolyl cis-trans isomerase H (182 aa).

The region spanning 15-181 (FFDITLGGEP…LDVVIAQCGE (167 aa)) is the PPIase cyclophilin-type domain.

It belongs to the cyclophilin-type PPIase family. PPIase H subfamily.

It is found in the nucleus. It catalyses the reaction [protein]-peptidylproline (omega=180) = [protein]-peptidylproline (omega=0). Functionally, PPIases accelerate the folding of proteins. It catalyzes the cis-trans isomerization of proline imidic peptide bonds in oligopeptides. The chain is Peptidyl-prolyl cis-trans isomerase H (cyp-3) from Neurospora crassa (strain ATCC 24698 / 74-OR23-1A / CBS 708.71 / DSM 1257 / FGSC 987).